Here is a 478-residue protein sequence, read N- to C-terminus: Cytochrome c biogenesis protein CcsB (478 aa).

The next 3 helical transmembrane spans lie at 30–50 (LRLAIGLFLAIALLSAVGTVI), 89–109 (TSWFLALLILFGSSLAACSLT), and 175–195 (FGPILVHVSLLLILLGAIWGS). The tract at residues 453–478 (LSSPPSPAKEPPPAARVGGTESLANG) is disordered. The span at 456–466 (PPSPAKEPPPA) shows a compositional bias: pro residues.

It belongs to the Ccs1/CcsB family. As to quaternary structure, may interact with CcsA.

Its subcellular location is the cellular thylakoid membrane. Its function is as follows. Required during biogenesis of c-type cytochromes (cytochrome c6 and cytochrome f) at the step of heme attachment. In Synechococcus sp. (strain JA-3-3Ab) (Cyanobacteria bacterium Yellowstone A-Prime), this protein is Cytochrome c biogenesis protein CcsB.